The following is a 298-amino-acid chain: Ribosomal protein L11 methyltransferase (298 aa).

The S-adenosyl-L-methionine site is built by Thr-152, Gly-173, Asp-195, and Asn-234.

It belongs to the methyltransferase superfamily. PrmA family.

The protein localises to the cytoplasm. The enzyme catalyses L-lysyl-[protein] + 3 S-adenosyl-L-methionine = N(6),N(6),N(6)-trimethyl-L-lysyl-[protein] + 3 S-adenosyl-L-homocysteine + 3 H(+). Methylates ribosomal protein L11. In Ralstonia pickettii (strain 12J), this protein is Ribosomal protein L11 methyltransferase.